Consider the following 289-residue polypeptide: 4-diphosphocytidyl-2-C-methyl-D-erythritol kinase (289 aa).

The active site involves K11. Residue 96–106 (PVAAGIGGGSS) coordinates ATP. Residue D138 is part of the active site.

It belongs to the GHMP kinase family. IspE subfamily.

It catalyses the reaction 4-CDP-2-C-methyl-D-erythritol + ATP = 4-CDP-2-C-methyl-D-erythritol 2-phosphate + ADP + H(+). It functions in the pathway isoprenoid biosynthesis; isopentenyl diphosphate biosynthesis via DXP pathway; isopentenyl diphosphate from 1-deoxy-D-xylulose 5-phosphate: step 3/6. Catalyzes the phosphorylation of the position 2 hydroxy group of 4-diphosphocytidyl-2C-methyl-D-erythritol. This Azorhizobium caulinodans (strain ATCC 43989 / DSM 5975 / JCM 20966 / LMG 6465 / NBRC 14845 / NCIMB 13405 / ORS 571) protein is 4-diphosphocytidyl-2-C-methyl-D-erythritol kinase.